A 107-amino-acid polypeptide reads, in one-letter code: Heme-degrading monooxygenase (107 aa).

The 93-residue stretch at 2 to 94 folds into the ABM domain; it reads IIVTNTTKIT…YILDNKIAYY (93 aa). N6 lines the Fe cation pocket. H76 provides a ligand contact to heme.

This sequence belongs to the antibiotic biosynthesis monooxygenase family. Heme-degrading monooxygenase IsdG subfamily. As to quaternary structure, homodimer.

It localises to the cytoplasm. The catalysed reaction is heme b + 3 reduced [NADPH--hemoprotein reductase] + 3 O2 = biliverdin IXalpha + CO + Fe(2+) + 3 oxidized [NADPH--hemoprotein reductase] + 3 H2O + H(+). Allows bacterial pathogens to use the host heme as an iron source. Catalyzes the oxidative degradation of the heme macrocyclic porphyrin ring to the biliverdin in the presence of a suitable electron donor such as ascorbate or NADPH--cytochrome P450 reductase, with subsequent release of free iron. The protein is Heme-degrading monooxygenase of Bacillus mycoides (strain KBAB4) (Bacillus weihenstephanensis).